The sequence spans 505 residues: Probable cytosol aminopeptidase (505 aa).

Lys269 and Asp274 together coordinate Mn(2+). Lys281 is a catalytic residue. Mn(2+) contacts are provided by Asp292, Asp351, and Glu353. The active site involves Arg355.

This sequence belongs to the peptidase M17 family. Requires Mn(2+) as cofactor.

Its subcellular location is the cytoplasm. It catalyses the reaction Release of an N-terminal amino acid, Xaa-|-Yaa-, in which Xaa is preferably Leu, but may be other amino acids including Pro although not Arg or Lys, and Yaa may be Pro. Amino acid amides and methyl esters are also readily hydrolyzed, but rates on arylamides are exceedingly low.. The catalysed reaction is Release of an N-terminal amino acid, preferentially leucine, but not glutamic or aspartic acids.. Presumably involved in the processing and regular turnover of intracellular proteins. Catalyzes the removal of unsubstituted N-terminal amino acids from various peptides. This Rhodococcus opacus (strain B4) protein is Probable cytosol aminopeptidase.